Consider the following 459-residue polypeptide: uncharacterized protein (459 aa).

The TRAM domain occupies 5-63 (PVEEGQKFPLTIRRMGINGEGIGYFKKAVVFVPGAITGEEVVVEAVKVRDRFTEAKLNK). Residues Cys-76, Cys-82, Cys-85, and Cys-166 each contribute to the [4Fe-4S] cluster site. Residues Gln-290, Tyr-319, Asp-340, and Asp-388 each coordinate S-adenosyl-L-methionine. The active-site Nucleophile is the Cys-415.

The protein belongs to the class I-like SAM-binding methyltransferase superfamily. RNA M5U methyltransferase family.

This is an uncharacterized protein from Listeria monocytogenes serovar 1/2a (strain ATCC BAA-679 / EGD-e).